The primary structure comprises 1854 residues: Immunoglobulin A1 protease (1854 aa).

Residues 1–37 (MKKFLGEKQTRFAFRKLAVGLVSAAISSLFFVSIVGV) form the signal peptide. Residues 38-99 (DSVQAQEKLN…NAGAKTLPNT (62 aa)) constitute a propeptide that is removed on maturation. An LPXTG sorting signal motif is present at residues 96-100 (LPNTG). Residue Thr99 is modified to Pentaglycyl murein peptidoglycan amidated threonine. The next 2 helical transmembrane spans lie at 106–125 (TMMAAGLLLTTIGLVVFAVS) and 132–154 (KFLLTVLVGASVGGGLILSVDAL). The Extracellular segment spans residues 155 to 1854 (ENGSLLQYNA…FRKSIFENQK (1700 aa)). Residues 256–335 (KPELLYKETS…PKIVEKGTKK (80 aa)) form the G5 domain. 10 tandem repeats follow at residues 349 to 368 (VQPEQVAPLPEYTGVQSGAI), 369 to 388 (VEPEQVASLPEYSGTLSGAI), 389 to 406 (VEPEQIEPEIGGVQSGAI), 407 to 426 (VEPEQVTPLPEYTGTQAGAV), 427 to 446 (VSPEQVAPLPEYTGTQSGAI), 447 to 466 (VEPAQVTPLPEYTGVQSGAI), 467 to 486 (VKPAQVTPLPEYTGTQSGAI), 487 to 506 (VEPEQVTPSPEYTGVQAGAI), 507 to 526 (VEPEQVASLPEYTGSQAGAI), and 527 to 546 (VEPEQVEPPQEYTGNIEPAA). The interval 349-546 (VQPEQVAPLP…EYTGNIEPAA (198 aa)) is 10 X 20 AA approximate tandem repeats. The segment covering 533-550 (EPPQEYTGNIEPAAPEAE) has biased composition (low complexity). The interval 533 to 570 (EPPQEYTGNIEPAAPEAENPTEKAQEPKEQKQEPEKNI) is disordered. The segment covering 552–570 (PTEKAQEPKEQKQEPEKNI) has biased composition (basic and acidic residues). Zn(2+) is bound at residue His1494. Glu1495 is an active-site residue. Positions 1498 and 1518 each coordinate Zn(2+).

It belongs to the peptidase M26 family. Zn(2+) serves as cofactor. In terms of processing, the Gram-positive cell-wall anchor motif LPXTG is located in the N-terminal part, in contrast to such motifs in other known streptococcal and staphylococcal proteins. The protease could be cleaved by the sortase and anchored in the membrane via the two potential N-terminal transmembrane domains, whereas the propeptide located prior to the LPXTG motif would remain attached to the cell wall peptidoglycan by an amide bond.

It is found in the secreted. The protein resides in the cell wall. Its subcellular location is the membrane. It carries out the reaction Cleavage of Pro-|-Thr bond in the hinge region of the heavy chain of human IgA.. With respect to regulation, inhibited by EDTA. Zinc metalloproteinase which cleaves human immunoglobulin A1 (IgA1) in the hinge region. The protein is Immunoglobulin A1 protease (iga) of Streptococcus sanguinis.